We begin with the raw amino-acid sequence, 110 residues long: Late cornified envelope protein 2C (110 aa).

Over residues 1–10 (MSCQQNQQQC) the composition is skewed to low complexity. The segment at 1–23 (MSCQQNQQQCQPPPKCPPKCTPK) is disordered. Pro residues predominate over residues 11 to 23 (QPPPKCPPKCTPK).

This sequence belongs to the LCE family. Interacts with CYSRT1; the interaction is direct. Skin-specific. Expression was readily detected in adult trunk skin, adult arm skin, fetal skin, penal skin, vulva, esophagus and tongue. Not expressed in the cervix, rectum, lung, colon, or placenta.

Its function is as follows. Precursors of the cornified envelope of the stratum. The polypeptide is Late cornified envelope protein 2C (LCE2C) (Homo sapiens (Human)).